Reading from the N-terminus, the 994-residue chain is Glycine dehydrogenase (decarboxylating), mitochondrial (994 aa).

The N-terminal 21 residues, methionine 1–tyrosine 21, are a transit peptide targeting the mitochondrion. Lysine 742 is modified (N6-(pyridoxal phosphate)lysine).

The protein belongs to the GcvP family. Homodimer. The glycine cleavage system is composed of four proteins: P, T, L and H. It depends on pyridoxal 5'-phosphate as a cofactor.

Its subcellular location is the mitochondrion. It catalyses the reaction N(6)-[(R)-lipoyl]-L-lysyl-[glycine-cleavage complex H protein] + glycine + H(+) = N(6)-[(R)-S(8)-aminomethyldihydrolipoyl]-L-lysyl-[glycine-cleavage complex H protein] + CO2. Its function is as follows. The glycine cleavage system catalyzes the degradation of glycine. The P protein binds the alpha-amino group of glycine through its pyridoxal phosphate cofactor; CO(2) is released and the remaining methylamine moiety is then transferred to the lipoamide cofactor of the H protein. In Dictyostelium discoideum (Social amoeba), this protein is Glycine dehydrogenase (decarboxylating), mitochondrial (gcvP).